We begin with the raw amino-acid sequence, 216 residues long: Urease accessory protein UreG (216 aa).

Residue 24–31 (GPVGSGKT) participates in GTP binding.

The protein belongs to the SIMIBI class G3E GTPase family. UreG subfamily. Homodimer. UreD, UreF and UreG form a complex that acts as a GTP-hydrolysis-dependent molecular chaperone, activating the urease apoprotein by helping to assemble the nickel containing metallocenter of UreC. The UreE protein probably delivers the nickel.

The protein localises to the cytoplasm. In terms of biological role, facilitates the functional incorporation of the urease nickel metallocenter. This process requires GTP hydrolysis, probably effectuated by UreG. This is Urease accessory protein UreG from Variovorax paradoxus (strain S110).